The following is a 162-amino-acid chain: Balbiani ring protein 2 (162 aa).

The tract at residues cysteine 1–threonine 31 is last constant region. Residues valine 32–lysine 51 form a last Cys-1 repeat region. The interval lysine 52–serine 162 is unique region.

As to expression, salivary gland.

It localises to the secreted. Functionally, used by the larvae to construct a supramolecular structure, the larval tube. This is Balbiani ring protein 2 (BR2) from Chironomus pallidivittatus (Midge).